Here is a 1196-residue protein sequence, read N- to C-terminus: Major DNA-binding protein (1196 aa).

The segment at 499 to 512 (CNLCTFDTRHACVH) is a zinc-finger region. 2 short sequence motifs (required for filament formation) span residues 843–844 (FW) and 1142–1144 (FNF). The disordered stretch occupies residues 1158–1196 (GGPGAPGPAFAGRKRAFHGDDPFGEGPPDKKGDLTLDML). The interval 1170–1196 (RKRAFHGDDPFGEGPPDKKGDLTLDML) is required for nuclear localization. Residues 1174–1196 (FHGDDPFGEGPPDKKGDLTLDML) are compositionally biased toward basic and acidic residues.

Belongs to the herpesviridae major DNA-binding protein family. In terms of assembly, homooligomers. Forms double-helical filaments necessary for the formation of replication compartments within the host nucleus. Interacts with the origin-binding protein. Interacts with the helicase primase complex; this interaction stimulates primer synthesis activity of the helicase-primase complex. Interacts with the DNA polymerase. Interacts with the alkaline exonuclease; this interaction increases its nuclease processivity. Interacts with ICP27; this interaction plays a role in the stimulation of late gene transcription.

The protein localises to the host nucleus. In terms of biological role, plays several crucial roles in viral infection. Participates in the opening of the viral DNA origin to initiate replication by interacting with the origin-binding protein. May disrupt loops, hairpins and other secondary structures present on ssDNA to reduce and eliminate pausing of viral DNA polymerase at specific sites during elongation. Promotes viral DNA recombination by performing strand-transfer, characterized by the ability to transfer a DNA strand from a linear duplex to a complementary single-stranded DNA circle. Can also catalyze the renaturation of complementary single strands. Additionally, reorganizes the host cell nucleus, leading to the formation of prereplicative sites and replication compartments. This process is driven by the protein which can form double-helical filaments in the absence of DNA. This chain is Major DNA-binding protein, found in Homo sapiens (Human).